We begin with the raw amino-acid sequence, 392 residues long: Selenide, water dikinase 1 (392 aa).

Position 2 is an N-acetylserine (Ser2). Cys31 is an active-site residue. ATP-binding positions include Lys32, 67–69 (GMD), Asp87, Asp110, and 161–164 (GGQT). Asp69 is a Mg(2+) binding site. Position 110 (Asp110) interacts with Mg(2+). Asp265 provides a ligand contact to Mg(2+).

This sequence belongs to the selenophosphate synthase 1 family. Class II subfamily. As to quaternary structure, homodimer. Heterodimer with isoform 3. In terms of assembly, homodimer. Heterodimer with isoform 4. Homodimer. Heterodimer with isoform 1. As to quaternary structure, homodimer. Heterodimer with isoform 2. Mg(2+) is required as a cofactor. As to expression, gradually expressed during the cell cycle until G2/M phase and then decreases. Gradually expressed during the cell cycle until S phase and then decreases.

The protein resides in the cell membrane. It localises to the nucleus membrane. It is found in the cytoplasm. The catalysed reaction is hydrogenselenide + ATP + H2O = selenophosphate + AMP + phosphate + 2 H(+). Its activity is regulated as follows. Activated by phosphate ions and by potassium ions. In terms of biological role, synthesizes selenophosphate from selenide and ATP. The sequence is that of Selenide, water dikinase 1 (SEPHS1) from Homo sapiens (Human).